Consider the following 68-residue polypeptide: Phosphatidylinositol N-acetylglucosaminyltransferase ERI1 subunit (68 aa).

A run of 2 helical transmembrane segments spans residues 8–28 (FLVLGFTYSVLLISLATFYWL) and 34–54 (FLHYWCVLLLCPATLWLWALI).

As to quaternary structure, component of the phosphatidylinositol N-acetylglucosaminyltransferase (GPI-GlcNAc transferase) complex composed of at least GPI1, GPI2, GPI3, GPI15, GPI19 and ERI1. Interacts with GPI2. Interacts with GTP-bound RAS2 in an effector loop-dependent manner.

Its subcellular location is the endoplasmic reticulum membrane. It functions in the pathway glycolipid biosynthesis; glycosylphosphatidylinositol-anchor biosynthesis. Functionally, probable component of the GPI-GlcNAc transferase (GPI-GnT) complex in the endoplasmic reticulum, a complex that catalyzes transfer of GlcNAc from UDP-GlcNAc to an acceptor phosphatidylinositol, the first step in the production of GPI-anchors for cell surface proteins. Ras may inhibit the enzyme activity of the GPI-GnT complex via the association between ERI1 and RAS2. The polypeptide is Phosphatidylinositol N-acetylglucosaminyltransferase ERI1 subunit (ERI1) (Saccharomyces cerevisiae (strain ATCC 204508 / S288c) (Baker's yeast)).